Consider the following 303-residue polypeptide: US1 protein (303 aa).

The tract at residues 230–284 (IPAPGRPLPRRRPSEGGMRAPRRRSRAPAPARSTAAAATPPRPGDPRAPAARRAG) is disordered. Positions 256–268 (APAPARSTAAAAT) are enriched in low complexity.

It belongs to the herpesviridae US2 family.

The polypeptide is US1 protein (US1) (Equine herpesvirus 1 (strain Kentucky A) (EHV-1)).